The primary structure comprises 500 residues: Glycerol kinase (500 aa).

Threonine 11 serves as a coordination point for ADP. Positions 11, 12, and 13 each coordinate ATP. Threonine 11 contributes to the sn-glycerol 3-phosphate binding site. Arginine 15 serves as a coordination point for ADP. Sn-glycerol 3-phosphate is bound by residues arginine 81, glutamate 82, tyrosine 133, and aspartate 242. Positions 81, 82, 133, 242, and 243 each coordinate glycerol. Threonine 264 and glycine 307 together coordinate ADP. Residues threonine 264, glycine 307, glutamine 311, and glycine 411 each coordinate ATP. Glycine 411 is a binding site for ADP.

This sequence belongs to the FGGY kinase family.

The catalysed reaction is glycerol + ATP = sn-glycerol 3-phosphate + ADP + H(+). The protein operates within polyol metabolism; glycerol degradation via glycerol kinase pathway; sn-glycerol 3-phosphate from glycerol: step 1/1. Inhibited by fructose 1,6-bisphosphate (FBP). Functionally, key enzyme in the regulation of glycerol uptake and metabolism. Catalyzes the phosphorylation of glycerol to yield sn-glycerol 3-phosphate. In Rhodopseudomonas palustris (strain ATCC BAA-98 / CGA009), this protein is Glycerol kinase.